We begin with the raw amino-acid sequence, 168 residues long: MFWKLSLSLFLVAVLVKVAEARKNRPAGAIPSPYKDGSSNNSERWQHQIKEVLASSQEALVVTERKYLKSDWCKTQPLRQTVSEEGCRSRTILNRFCYGQCNSFYIPRHVKKEEESFQSCAFCKPQRVTSVLVELECPGLDPPFRLKKIQKVKQCRCMSVNLSDSDKQ.

An N-terminal signal peptide occupies residues 1-21 (MFWKLSLSLFLVAVLVKVAEA). The N-linked (GlcNAc...) asparagine glycan is linked to asparagine 40. 4 disulfides stabilise this stretch: cysteine 73–cysteine 123, cysteine 87–cysteine 137, cysteine 97–cysteine 155, and cysteine 101–cysteine 157. Positions 73-163 (CKTQPLRQTV…QCRCMSVNLS (91 aa)) constitute a CTCK domain. The N-linked (GlcNAc...) asparagine glycan is linked to asparagine 161.

This sequence belongs to the DAN family. Homodimer. Interacts with BMP2, BMP4 and BMP7, but has lower affinity for BMP7 than for BMP2 and BMP4. Binds heparin; this impairs the interaction with BMP2. In terms of processing, N-glycosylated.

The protein localises to the secreted. Its function is as follows. Cytokine that inhibits the activity of BMP2 and BMP4 in a dose-dependent manner, and thereby modulates signaling by BMP family members. Contributes to the regulation of embryonic morphogenesis via BMP family members. Antagonizes BMP4-induced suppression of progesterone production in granulosa cells. This Homo sapiens (Human) protein is Gremlin-2 (GREM2).